The chain runs to 215 residues: MNIFRLSGDVCHLIAIIILFLKIWRSKSCAGISGKSQVLFALVFTTRYLDLFTSYISAYNTVMKVVYLLLAYSTVGLIFFRFRNSYDSESDSFRVEFLLVPVAGLSFLENYAFTPLEILWTFSIYLESVAILPQLFMITKTGEAESITAHYLLFLGLYRALYLANWLWRFHTEGFYDQIAVVSGVVQTIFYCDFFYLYFTRVLRGSGKMSLPMPV.

Residues 1 to 4 (MNIF) lie on the Lumenal side of the membrane. A helical transmembrane segment spans residues 5 to 24 (RLSGDVCHLIAIIILFLKIW). The Cytoplasmic portion of the chain corresponds to 25 to 32 (RSKSCAGI). A helical membrane pass occupies residues 33 to 52 (SGKSQVLFALVFTTRYLDLF). The interval 47–48 (RY) is interaction with the K-D-E-L motif on target proteins. The Lumenal segment spans residues 53–58 (TSYISA). The chain crosses the membrane as a helical span at residues 59 to 79 (YNTVMKVVYLLLAYSTVGLIF). Topologically, residues 80-92 (FRFRNSYDSESDS) are cytoplasmic. The chain crosses the membrane as a helical span at residues 93 to 110 (FRVEFLLVPVAGLSFLEN). The Lumenal portion of the chain corresponds to 111–116 (YAFTPL). The helical transmembrane segment at 117-135 (EILWTFSIYLESVAILPQL) threads the bilayer. The Cytoplasmic portion of the chain corresponds to 136–149 (FMITKTGEAESITA). The helical transmembrane segment at 150–168 (HYLLFLGLYRALYLANWLW) threads the bilayer. The interval 159 to 169 (RALYLANWLWR) is interaction with the K-D-E-L motif on target proteins. At 169–178 (RFHTEGFYDQ) the chain is on the lumenal side. The helical transmembrane segment at 179 to 199 (IAVVSGVVQTIFYCDFFYLYF) threads the bilayer. The Cytoplasmic segment spans residues 200 to 215 (TRVLRGSGKMSLPMPV). Positions 204-208 (RGSGK) are important for recycling of cargo proteins with the sequence motif K-D-E-L from the Golgi to the endoplasmic reticulum.

This sequence belongs to the ERD2 family.

Its subcellular location is the endoplasmic reticulum membrane. The protein localises to the golgi apparatus membrane. The protein resides in the cytoplasmic vesicle. It localises to the COPI-coated vesicle membrane. In terms of biological role, receptor for the C-terminal sequence motif K-D-E-L that is present on endoplasmic reticulum resident proteins and that mediates their recycling from the Golgi back to the endoplasmic reticulum. This Danio rerio (Zebrafish) protein is ER lumen protein-retaining receptor 3 (kdelr3).